The following is a 281-amino-acid chain: ATP synthase gamma chain (281 aa).

It belongs to the ATPase gamma chain family. As to quaternary structure, F-type ATPases have 2 components, CF(1) - the catalytic core - and CF(0) - the membrane proton channel. CF(1) has five subunits: alpha(3), beta(3), gamma(1), delta(1), epsilon(1). CF(0) has three main subunits: a, b and c.

The protein resides in the cell membrane. Functionally, produces ATP from ADP in the presence of a proton gradient across the membrane. The gamma chain is believed to be important in regulating ATPase activity and the flow of protons through the CF(0) complex. This Desulfitobacterium hafniense (strain DSM 10664 / DCB-2) protein is ATP synthase gamma chain.